A 472-amino-acid polypeptide reads, in one-letter code: Mothers against decapentaplegic homolog 1 (472 aa).

Residues 12-136 enclose the MH1 domain; that stretch reads PAVKRLLGWK…YKRVDSPVLP (125 aa). C64, C109, C121, and H126 together coordinate Zn(2+). A disordered region spans residues 158–238; it reads NPLHQTEPPM…PPPAYMPPEE (81 aa). Residues 169 to 182 are compositionally biased toward polar residues; sequence QNATFPDSFPQQPA. The span at 188-226 shows a compositional bias: low complexity; sequence TPNSPTNSYPSSPNSGTGSTATFPHSPSSSDPGSPFQMP. The segment covering 227 to 238 has biased composition (pro residues); that stretch reads ETPPPAYMPPEE. Residues 278–472 enclose the MH2 domain; sequence WCSIVYYELN…SPHNPISSVS (195 aa).

This sequence belongs to the dwarfin/SMAD family. In terms of assembly, may form trimers with another Smad1 and the co-Smad Smad4.

Its subcellular location is the cytoplasm. The protein localises to the nucleus. In terms of biological role, involved in ventralization. May mediate Bmp2b signaling during embryonic dorsal-ventral pattern formation, and may itself be a transcriptional target for Smad5-mediated Bmp2b signaling. The protein is Mothers against decapentaplegic homolog 1 (smad1) of Danio rerio (Zebrafish).